Consider the following 473-residue polypeptide: Photosystem II CP43 reaction center protein (473 aa).

The propeptide occupies 1 to 14 (MKTLYSLRRFSHVE). Position 15 is an N-acetylthreonine (Thr-15). Thr-15 is subject to Phosphothreonine. The next 5 membrane-spanning stretches (helical) occupy residues 69 to 93 (LFEV…PHLA), 134 to 155 (LLGP…KDRN), 178 to 200 (KALY…RKIT), 255 to 275 (KPFA…LSYS), and 291 to 312 (WFNN…ASQA). [CaMn4O5] cluster is bound at residue Glu-367. The helical transmembrane segment at 447-471 (RARAAAAGFEKGIDRDFEPVLSMTP) threads the bilayer.

The protein belongs to the PsbB/PsbC family. PsbC subfamily. As to quaternary structure, PSII is composed of 1 copy each of membrane proteins PsbA, PsbB, PsbC, PsbD, PsbE, PsbF, PsbH, PsbI, PsbJ, PsbK, PsbL, PsbM, PsbT, PsbX, PsbY, PsbZ, Psb30/Ycf12, at least 3 peripheral proteins of the oxygen-evolving complex and a large number of cofactors. It forms dimeric complexes. Requires Binds multiple chlorophylls and provides some of the ligands for the Ca-4Mn-5O cluster of the oxygen-evolving complex. It may also provide a ligand for a Cl- that is required for oxygen evolution. PSII binds additional chlorophylls, carotenoids and specific lipids. as cofactor.

It localises to the plastid membrane. One of the components of the core complex of photosystem II (PSII). It binds chlorophyll and helps catalyze the primary light-induced photochemical processes of PSII. PSII is a light-driven water:plastoquinone oxidoreductase, using light energy to abstract electrons from H(2)O, generating O(2) and a proton gradient subsequently used for ATP formation. The polypeptide is Photosystem II CP43 reaction center protein (Cuscuta obtusiflora (Peruvian dodder)).